A 465-amino-acid polypeptide reads, in one-letter code: Glutamate--tRNA ligase 1 (465 aa).

The 'HIGH' region signature appears at 8 to 18 (PSPTGLMHLGN). Positions 249-253 (PLSKR) match the 'KMSKS' region motif. Lysine 252 is a binding site for ATP.

This sequence belongs to the class-I aminoacyl-tRNA synthetase family. Glutamate--tRNA ligase type 1 subfamily. Monomer.

The protein localises to the cytoplasm. The enzyme catalyses tRNA(Glu) + L-glutamate + ATP = L-glutamyl-tRNA(Glu) + AMP + diphosphate. In terms of biological role, catalyzes the attachment of glutamate to tRNA(Glu) in a two-step reaction: glutamate is first activated by ATP to form Glu-AMP and then transferred to the acceptor end of tRNA(Glu). The polypeptide is Glutamate--tRNA ligase 1 (Coxiella burnetii (strain CbuG_Q212) (Coxiella burnetii (strain Q212))).